The following is a 465-amino-acid chain: DGFKAGVKDYRLTYYTPEYQTKDTDILAAFRVTPQPGVPPEEAGWAVAAESSTGTWTTVWTDGLTSLDRYKGRCCDIEPVPGEDNQYFAYVAYPLDLFEEGSVTNMFTSIVGNVFGFKALRALRLEDLRIPTAYIQTFQGPPHGIQVERDKLNKYGRPLLGCTIKPKLGLSAKNYGRAVYECLRGGLDFTKDDENVNSRAFMRWRDRFVFCAEAIYKAQAETGEIKGHYLNATSGTCEEMIKRAVFARELGVPIVMHDYLTGGFTANTTLAHYCRDNGLLLHIHRAMHAVIDRQKNHGMHFRVLAKALRMSGGDHIHAGTVVGKLEGEREITLGFVDLLRDDFIEKDRSRGIYFTQDWVSMPGVLPVASGGIHVWHMPALTEIFGDDAVLQFGGGTLGHPWGNAPGAVANRVALEACVQARNEGRDLAREGNEVIREACKWSPELAAACEVWKEIKFEFATVDTL.

Lysine 4 is subject to N6,N6,N6-trimethyllysine. Asparagine 113 and threonine 163 together coordinate substrate. Residue lysine 165 is the Proton acceptor of the active site. Residue lysine 167 participates in substrate binding. Mg(2+) is bound by residues lysine 191, aspartate 193, and glutamate 194. An N6-carboxylysine modification is found at lysine 191. The Proton acceptor role is filled by histidine 284. Positions 285, 317, and 369 each coordinate substrate.

This sequence belongs to the RuBisCO large chain family. Type I subfamily. Heterohexadecamer of 8 large chains and 8 small chains; disulfide-linked. The disulfide link is formed within the large subunit homodimers. The cofactor is Mg(2+). The disulfide bond which can form in the large chain dimeric partners within the hexadecamer appears to be associated with oxidative stress and protein turnover.

The protein localises to the plastid. It is found in the chloroplast. The catalysed reaction is 2 (2R)-3-phosphoglycerate + 2 H(+) = D-ribulose 1,5-bisphosphate + CO2 + H2O. It catalyses the reaction D-ribulose 1,5-bisphosphate + O2 = 2-phosphoglycolate + (2R)-3-phosphoglycerate + 2 H(+). In terms of biological role, ruBisCO catalyzes two reactions: the carboxylation of D-ribulose 1,5-bisphosphate, the primary event in carbon dioxide fixation, as well as the oxidative fragmentation of the pentose substrate in the photorespiration process. Both reactions occur simultaneously and in competition at the same active site. This is Ribulose bisphosphate carboxylase large chain from Ephedra tweediana (Vining horsetail).